Here is a 229-residue protein sequence, read N- to C-terminus: Transcriptional regulatory protein YxdJ (229 aa).

Residues 3–116 (KIMIVEDSED…IVLAKIKSQI (114 aa)) enclose the Response regulatory domain. Residue aspartate 52 is modified to 4-aspartylphosphate. The segment at residues 129 to 227 (EKVVEYAGVQ…VRGEGYQLRA (99 aa)) is a DNA-binding region (ompR/PhoB-type).

Post-translationally, phosphorylated by YxdK.

The protein localises to the cytoplasm. Functionally, probable member of the two-component regulatory system YxdK/YxdJ. Positively regulates the expression of the yxdLMyxeA operon by direct interaction with its promoter region. Could also indirectly regulate the expression of the dlt operon. This is Transcriptional regulatory protein YxdJ (yxdJ) from Bacillus subtilis (strain 168).